The sequence spans 243 residues: Adenine phosphoribosyltransferase 1, chloroplastic (243 aa).

The transit peptide at 1–52 (MQTIIISPLVSHRLCLARAVPCNRLLNNHHRAPPSIRLSNHRSTTSLRLFSS) directs the protein to the chloroplast. An N-acetylalanine modification is found at Gln-2.

It belongs to the purine/pyrimidine phosphoribosyltransferase family. In terms of assembly, homodimer.

It is found in the plastid. The protein resides in the chloroplast. Its subcellular location is the cytoplasm. The enzyme catalyses AMP + diphosphate = 5-phospho-alpha-D-ribose 1-diphosphate + adenine. It participates in purine metabolism; AMP biosynthesis via salvage pathway; AMP from adenine: step 1/1. Catalyzes a salvage reaction resulting in the formation of AMP, that is energically less costly than de novo synthesis. Contributes primarily to the recycling of adenine into adenylate nucleotides, but is also involved in the inactivation of cytokinins by phosphoribosylation. Catalyzes the conversion of cytokinins from free bases (active form) to the corresponding nucleotides (inactive form). The chain is Adenine phosphoribosyltransferase 1, chloroplastic (APT1) from Arabidopsis thaliana (Mouse-ear cress).